A 460-amino-acid chain; its full sequence is Inner membrane symporter YicJ (460 aa).

The Periplasmic segment spans residues 1 to 11; sequence MKSEVLSVKEK. Helical transmembrane passes span 12-32 and 33-53; these read IGYG…MLYM and MFFY…MFLV. Residues 54-80 lie on the Periplasmic side of the membrane; sequence ARALDAISDPCMGLLADRTRSRWGKFR. The chain crosses the membrane as a helical span at residues 81 to 101; the sequence is PWVLFGALPFGIVCVLAYSTP. The Cytoplasmic portion of the chain corresponds to 102-116; that stretch reads DLSMNGKMIYAAITY. The chain crosses the membrane as a helical span at residues 117–137; the sequence is TLLTLLYTVVNIPYCALGGVI. The Periplasmic portion of the chain corresponds to 138-152; the sequence is TNDPTQRISLQSWRF. Residues 153–173 form a helical membrane-spanning segment; that stretch reads VLATAGGMLSTVLMMPLVNLI. Residues 174–181 are Cytoplasmic-facing; the sequence is GGDNKPLG. Residues 182–202 traverse the membrane as a helical segment; that stretch reads FQGGIAVLSVVAFMMLAFCFF. Residues 203–248 are Periplasmic-facing; that stretch reads TTKERVEAPPTTTSMREDLRDIWQNDQWRIVGLLTIFNILAVCVRG. A helical membrane pass occupies residues 249-269; sequence GAMMYYVTWILGTPEVFVAFL. Residues 270–288 lie on the Cytoplasmic side of the membrane; the sequence is TTYCVGNLIGSALAKPLTD. Residues 289-309 traverse the membrane as a helical segment; it reads WKCKVTIFWWTNALLAVISLA. Residue Met-310 is a topological domain, periplasmic. The helical transmembrane segment at 311–331 threads the bilayer; that stretch reads FFVPMQASITMFVFIFVIGVL. Over 332–366 the chain is Cytoplasmic; sequence HQLVTPIQWVMMSDTVDYGEWCNGKRLTGISFAGT. Residues 367–387 form a helical membrane-spanning segment; that stretch reads LFVLKLGLAFGGALIGWMLAY. Topologically, residues 388–403 are periplasmic; that stretch reads GGYDAAEKAQNSATIS. A helical membrane pass occupies residues 404–424; the sequence is IIIALFTIVPAICYLLSAIIA. The Cytoplasmic segment spans residues 425 to 460; that stretch reads KRYYSLTTHNLKTVMEQLAQGKRRCQQQFTSQEVQN.

The protein belongs to the sodium:galactoside symporter (TC 2.A.2) family.

It localises to the cell inner membrane. The polypeptide is Inner membrane symporter YicJ (yicJ) (Escherichia coli (strain K12)).